Consider the following 325-residue polypeptide: Basic membrane protein A (325 aa).

Residues 1-3 (FLS) form the signal peptide. A lipid anchor (N-palmitoyl cysteine) is attached at Cys-4. Residue Cys-4 is the site of S-diacylglycerol cysteine attachment.

This sequence belongs to the BMP lipoprotein family. Monomer.

It localises to the cell inner membrane. In terms of biological role, immunogenic protein. May be part of an ABC-type nucleoside uptake system involved in the purine salvage pathway. The polypeptide is Basic membrane protein A (bmpA) (Borreliella afzelii (Borrelia afzelii)).